The sequence spans 220 residues: MKRSASDSPLLFDIPLAPDFSEEKRLLARGLKHIVGIDEAGRGPLAGPVVAAAVVLDIDNLPNGLDDSKRLTAVKREALYETILEKAITVSVASLSARSIDASDIRKAALEAMRRASVGLTLQPCHALIDGRDVPPGLPCPGSALVKGDQRSVSIAAASIVAKVTRDRMMIRAGAAHPPYGLEIHAGYATVKHRAAIETTGPVPGIHRYTFAPIKGRYSV.

Residues 32–220 (KHIVGIDEAG…FAPIKGRYSV (189 aa)) form the RNase H type-2 domain. A divalent metal cation contacts are provided by Asp-38, Glu-39, and Asp-130.

The protein belongs to the RNase HII family. Mn(2+) is required as a cofactor. The cofactor is Mg(2+).

It localises to the cytoplasm. The enzyme catalyses Endonucleolytic cleavage to 5'-phosphomonoester.. Functionally, endonuclease that specifically degrades the RNA of RNA-DNA hybrids. This Brucella anthropi (strain ATCC 49188 / DSM 6882 / CCUG 24695 / JCM 21032 / LMG 3331 / NBRC 15819 / NCTC 12168 / Alc 37) (Ochrobactrum anthropi) protein is Ribonuclease HII.